The primary structure comprises 257 residues: Ubiquinone biosynthesis O-methyltransferase (257 aa).

S-adenosyl-L-methionine-binding residues include R43, G77, D98, and M144.

It belongs to the methyltransferase superfamily. UbiG/COQ3 family.

The enzyme catalyses a 3-demethylubiquinol + S-adenosyl-L-methionine = a ubiquinol + S-adenosyl-L-homocysteine + H(+). The catalysed reaction is a 3-(all-trans-polyprenyl)benzene-1,2-diol + S-adenosyl-L-methionine = a 2-methoxy-6-(all-trans-polyprenyl)phenol + S-adenosyl-L-homocysteine + H(+). It functions in the pathway cofactor biosynthesis; ubiquinone biosynthesis. O-methyltransferase that catalyzes the 2 O-methylation steps in the ubiquinone biosynthetic pathway. The polypeptide is Ubiquinone biosynthesis O-methyltransferase (Psychrobacter cryohalolentis (strain ATCC BAA-1226 / DSM 17306 / VKM B-2378 / K5)).